The following is a 609-amino-acid chain: Isopenicillin N epimerase component 1 (609 aa).

185–196 (MLSGSGTTGLPK) serves as a coordination point for AMP. A disordered region spans residues 545–570 (STDNHKHNKVPLRDEGVDPRSMGSKV).

It belongs to the ATP-dependent AMP-binding enzyme family.

The enzyme catalyses isopenicillin N = penicillin N. It functions in the pathway antibiotic biosynthesis; cephalosporin C biosynthesis. Its function is as follows. Together with cefD2, catalyzes the reversible isomerization between isopenicillin N and penicillin N. This two-component IPN epimerase system may function by two sequential steps, an activation of isopenicillin N by the acyl-CoA synthase component cefD1, followed by epimerization by the acyl-CoA racemase component cefD2. This is Isopenicillin N epimerase component 1 (cefD1) from Hapsidospora chrysogena (Acremonium chrysogenum).